Reading from the N-terminus, the 398-residue chain is MAKEKYDRSKPHVNIGTIGHVDHGKTTLTAAITTVLARRLPSAVNQPKDYSSIDAAPEERERGITINTAHVEYETEKRHYAHIDAPGHADYVKNMITGAAQMDGAILVVASTDGPMPQTREHILLSRQVGVKYLIVFMNKVDLVDDEELLELVEMEIRDLLSEYDFPGDDIPVIQGSALKALEGDTAQEDIIMELMHTVDDYIPDPERDTDKPLLLPVEDVFSITGRGTVASGRIDRGTVKVNDEVEIVGIRDDIQKAVVTGVEMFRKQLDEGIAGDNVGVLLRGIQRDEIERGQVLAKPGSIHPHTKFKGEVYILTKEEGGRHTPFFNNYRPQFYFRTTDVTGSIELPAGTEMVMPGDNVTIDVELIHPIAVEQGTTFSIREGGRTVGSGIVSEIEA.

Positions 10–207 constitute a tr-type G domain; the sequence is KPHVNIGTIG…TVDDYIPDPE (198 aa). The interval 19–26 is G1; the sequence is GHVDHGKT. Position 19-26 (19-26) interacts with GTP; the sequence is GHVDHGKT. Residue Thr26 participates in Mg(2+) binding. The segment at 63–67 is G2; sequence GITIN. The tract at residues 84 to 87 is G3; sequence DAPG. Residues 84 to 88 and 139 to 142 each bind GTP; these read DAPGH and NKVD. Residues 139–142 form a G4 region; the sequence is NKVD. The G5 stretch occupies residues 177-179; it reads SAL.

The protein belongs to the TRAFAC class translation factor GTPase superfamily. Classic translation factor GTPase family. EF-Tu/EF-1A subfamily. Monomer.

It is found in the cytoplasm. It carries out the reaction GTP + H2O = GDP + phosphate + H(+). In terms of biological role, GTP hydrolase that promotes the GTP-dependent binding of aminoacyl-tRNA to the A-site of ribosomes during protein biosynthesis. This is Elongation factor Tu from Streptococcus mutans serotype c (strain ATCC 700610 / UA159).